Here is a 61-residue protein sequence, read N- to C-terminus: Metallothionein-1C (61 aa).

The tract at residues 1–29 (MDPNCSCSTGGSCSCAGSCTCKACRCTSC) is beta. A divalent metal cation contacts are provided by Cys5, Cys7, Cys13, Cys15, Cys19, Cys21, Cys24, Cys26, Cys29, Cys33, Cys34, Cys36, Cys37, Cys41, Cys44, Cys48, Cys50, Cys57, Cys59, and Cys60. The segment at 30-61 (KKSCCSCCPAGCARCAQGCICKGASDKCSCCA) is alpha.

It belongs to the metallothionein superfamily. Type 1 family. As to quaternary structure, monomer.

Metallothioneins have a high content of cysteine residues that bind various heavy metals; these proteins are transcriptionally regulated by both heavy metals and glucocorticoids. The sequence is that of Metallothionein-1C (MT1C) from Sus scrofa (Pig).